Consider the following 342-residue polypeptide: MDETSIINENTDVFEKKITLIERNLQEITINDKEIIRKIIRKRNLKIYWGTAITGKPHIGYFLPILKIKDFVEAECEVTILFADIHGFLDNLKAPIELIENRYHYYEKIIKIMLMSVGCDINKIRFVKGSDYQKNSDYVFDLYKLCSYTTERDCKRAGSDVVKQRDNVLLSSLIYPNMQALDEEYLKVDAQFGGEDQRKIFMHAKTFLPKLGYKKRIHLMNPMMPGLNSDKMSSSDELSKIDLLDTEQQINKKINKCFCEEGNLQSGVLHVFEFVIFHYYTSISINKKSYTSIEDVKKDFEMKLIHPKDLKLACSNYINKMVTPIRNEMLKDIDMIKKAYNN.

Tyr48 serves as a coordination point for L-tyrosine. The 'HIGH' region motif lies at 53-61; sequence ITGKPHIGY. L-tyrosine is bound by residues Tyr175, Gln179, Asp182, and Gln197. A 'KMSKS' region motif is present at residues 231 to 235; sequence KMSSS.

It belongs to the class-I aminoacyl-tRNA synthetase family. As to quaternary structure, homodimer.

The protein localises to the cytoplasm. The catalysed reaction is tRNA(Tyr) + L-tyrosine + ATP = L-tyrosyl-tRNA(Tyr) + AMP + diphosphate + H(+). The chain is Probable tyrosine--tRNA ligase, cytoplasmic from Enterocytozoon bieneusi (strain H348) (Microsporidian parasite).